Reading from the N-terminus, the 491-residue chain is MKNWKKYAFASASVVALAAGLAACGNLTGNSKKAADSGDKPVIKMYQIGDKPDNLDELLANANKIIEEKVGAKLDIQYLGWGDYGKKMSVITSSGENYDIAFADNYIVNAQKGAYADLTELYKKEGKDLYKALDPAYIKGNTVNGKIYAVPVAANVASSQNFAFNGTLLAKYGIDISGVTSYETLEPVLKQIKEKAPDVVPFAIGKVFIPSDNFDYPVANGLPFVIDLEGDTTKVVNRYEVPRFKEHLKTLHKFYEAGYIPKDVATSDTSFDLQQDTWFVREETVGPADYGNSLLSRVANKDIQIKPITNFIKKNQTTQVANFVISNNSKNKEKSMEILNLLNTNPELLNGLVYGPEGKNWEKIEGKENRVRVLDGYKGNTHMGGWNTGNNWILYINENVTDQQIENSKKELAEAKESPALGFIFNTDNVKSEISAIANTMQQFDTAINTGTVDPDKAIPELMEKLKSEGAYEKVLNEMQKQYDEFLKNKK.

Zn(2+) contacts are provided by Asp212, His247, His252, and Glu256.

It belongs to the bacterial solute-binding protein 1 family. As to quaternary structure, exists as a monomer, homodimer, homotrimer and homotetramer; oligomerization increases with higher protein concentration.

It is found in the cell surface. In terms of biological role, probably part of an ABC transporter complex involved in carbohydrate transport. In Streptococcus pneumoniae serotype 4 (strain ATCC BAA-334 / TIGR4), this protein is Carbohydrate ABC transporter substrate-binding protein.